The sequence spans 75 residues: Penaeidin-3l (75 aa).

A signal peptide spans 1 to 19 (MRLVVCLVFLASFALVCQG). Gln20 bears the Pyrrolidone carboxylic acid mark. Disulfide bonds link Cys44–Cys59, Cys48–Cys66, and Cys60–Cys67. Serine amide is present on Ser74.

This sequence belongs to the penaeidin family.

The protein resides in the cytoplasmic granule. Functionally, antibacterial and antifungal activity. Presents chitin-binding activity. This is Penaeidin-3l from Penaeus setiferus (Atlantic white shrimp).